Here is a 402-residue protein sequence, read N- to C-terminus: Multidrug resistance protein MdtH (402 aa).

A run of 11 helical transmembrane segments spans residues 13–33, 34–54, 99–116, 139–159, 165–185, 214–234, 243–263, 277–297, 300–320, 340–360, and 369–389; these read YFLL…FPLI, SIRF…ALGL, PWVL…GTLF, ILMM…SWLL, LVCS…AWYL, VLTL…LPIM, AAVK…LYPI, LMAG…TSSL, LFTL…ARET, LGLA…FDAG, and PWLM…WQFS.

Belongs to the major facilitator superfamily. DHA1 family. MdtH (TC 2.A.1.2.21) subfamily.

The protein localises to the cell inner membrane. This Klebsiella pneumoniae subsp. pneumoniae (strain ATCC 700721 / MGH 78578) protein is Multidrug resistance protein MdtH.